A 158-amino-acid polypeptide reads, in one-letter code: Succinate dehydrogenase [ubiquinone] cytochrome b small subunit B, mitochondrial (158 aa).

The N-terminal 29 residues, 1–29, are a transit peptide targeting the mitochondrion; it reads MAALVRISSLCHRGVSPLLFRPSSLIRPL. Topologically, residues 30–62 are mitochondrial matrix; sequence AVQQKDHDCSYLISARIHATPSNYAGSGSKAAT. Residues 63–84 traverse the membrane as a helical segment; the sequence is MHWTGERILSIALLSLAPVAYF. Residues 85–89 lie on the Mitochondrial intermembrane side of the membrane; the sequence is CPSPA. Residues 90 to 110 traverse the membrane as a helical segment; it reads VDYSLAAALTLHGHWGLGQVV. Heme b is bound at residue H101. Residues 111-119 lie on the Mitochondrial matrix side of the membrane; sequence TDYVHGDAK. Y113 lines the a ubiquinone pocket. A helical membrane pass occupies residues 120-141; it reads IKMANAGLFVLSTVTFAGLCYF. Over 142–158 the chain is Mitochondrial intermembrane; it reads NYHDVGICKAVALLWSK.

It belongs to the CybS family. In terms of assembly, component of complex II composed of four subunits: the flavoprotein (FP) SDHA, iron-sulfur protein (IP) SDHB, and a cytochrome b560 composed of SDHC and SDHD.

The protein localises to the mitochondrion inner membrane. It participates in carbohydrate metabolism; tricarboxylic acid cycle. Functionally, membrane-anchoring subunit of succinate dehydrogenase (SDH) that is involved in complex II of the mitochondrial electron transport chain and is responsible for transferring electrons from succinate to ubiquinone (coenzyme Q). SDH also oxidizes malate to the non-canonical enol form of oxaloacetate, enol-oxaloacetate. Enol-oxaloacetate, which is a potent inhibitor of the succinate dehydrogenase activity, is further isomerized into keto-oxaloacetate. The chain is Succinate dehydrogenase [ubiquinone] cytochrome b small subunit B, mitochondrial (sdhdb) from Danio rerio (Zebrafish).